Consider the following 708-residue polypeptide: Leukotoxin translocation ATP-binding protein LktB (708 aa).

Residues 1 to 126 (MEANHQRNDL…ACYQGQLILV (126 aa)) form the Peptidase C39 domain. In terms of domain architecture, ABC transmembrane type-1 spans 155 to 437 (FLETLIVSIF…LAQLWQDFQQ (283 aa)). 5 helical membrane passes run 159–179 (LIVSIFLQIFALITPLFFQVV), 192–212 (LNIITVALAIVIIFEIVLSGL), 270–290 (ALTSVLDLLFSFIFFAVMWYY), 296–316 (LVILGSLPCYILWSIFISPIL), and 389–409 (VMVINLWLGAHLVISGDLSIG). Residues 469–704 (ISFKNIRFRY…SNGLYSYLHQ (236 aa)) form the ABC transporter domain. 503–510 (GRSGSGKS) contacts ATP.

Belongs to the ABC transporter superfamily. Protein-1 exporter (TC 3.A.1.109) family. As to quaternary structure, homodimer.

It localises to the cell inner membrane. The catalysed reaction is ATP + H2O + proteinSide 1 = ADP + phosphate + proteinSide 2.. Functionally, part of the ABC transporter complex LktBD involved in leukotoxin export. Transmembrane domains (TMD) form a pore in the inner membrane and the ATP-binding domain (NBD) is responsible for energy generation. This chain is Leukotoxin translocation ATP-binding protein LktB (lktB), found in Mannheimia haemolytica (Pasteurella haemolytica).